The following is a 232-amino-acid chain: MLGAMFRAGTPMPPNLNSQGGGHYFIDRDGKAFRHILNFLRLGRLDLPRGYGETALLRAEADFYQIRPLLDALRELEASQGTPAPTAALLHADVDVSPRLVHFSARRGPHHYELSSVQVDTFRANLFCTDSECLGALRARFGVASGDRAEGSPHFHLEWAPRPVELPEVEYGRLGLQPLWTGGPGERREVVGTPSFLEEVLRVALEHGFRLDSVFPDPEDLLNSRSLRFVRH.

The region spanning 1-49 is the BTB domain; that stretch reads MLGAMFRAGTPMPPNLNSQGGGHYFIDRDGKAFRHILNFLRLGRLDLPR.

In terms of assembly, homopentamer. Interacts with KCTD6 and KCTD21; KCTD11 and KCTD6 or KCTD21 may associate in pentameric assemblies. Component of the BCR(KCTD11) E3 ubiquitin ligase complex, at least composed of CUL3 and KCTD11 and RBX1. Interacts (via BTB domain) with CUL3; initially a 4:4 stoichiometry has been reported, however, electron microscopy revealed pentameric states of the BTB domain. As to expression, higher expression in cerebellum than in whole brain and lower expression in medulloblastoma.

It participates in protein modification; protein ubiquitination. Plays a role as a marker and a regulator of neuronal differentiation; Up-regulated by a variety of neurogenic signals, such as retinoic acid, epidermal growth factor/EGF and NGFB/nerve growth factor. Induces apoptosis, growth arrest and the expression of cyclin-dependent kinase inhibitor CDKN1B. Plays a role as a tumor repressor and inhibits cell growth and tumorigenicity of medulloblastoma (MDB). Acts as a probable substrate-specific adapter for a BCR (BTB-CUL3-RBX1) E3 ubiquitin-protein ligase complex towards HDAC1. Functions as antagonist of the Hedgehog pathway on cell proliferation and differentiation by affecting the nuclear transfer of transcription factor GLI1, thus maintaining cerebellar granule cells in undifferentiated state, this effect probably occurs via HDAC1 down-regulation, keeping GLI1 acetylated and inactive. When knock-down, Hedgehog antagonism is impaired and proliferation of granule cells is sustained. Activates the caspase cascade. The chain is BTB/POZ domain-containing protein KCTD11 (KCTD11) from Homo sapiens (Human).